A 94-amino-acid chain; its full sequence is DNA-binding protein HU (94 aa).

This sequence belongs to the bacterial histone-like protein family. In terms of assembly, homodimer.

Functionally, histone-like DNA-binding protein which is capable of wrapping DNA to stabilize it, and thus to prevent its denaturation under extreme environmental conditions. The chain is DNA-binding protein HU (hup) from Helicobacter pylori (strain J99 / ATCC 700824) (Campylobacter pylori J99).